Consider the following 127-residue polypeptide: Glycine cleavage system H protein (127 aa).

A Lipoyl-binding domain is found at Thr24 to Lys105. Lys65 carries the N6-lipoyllysine modification.

Belongs to the GcvH family. The glycine cleavage system is composed of four proteins: P, T, L and H. (R)-lipoate is required as a cofactor.

In terms of biological role, the glycine cleavage system catalyzes the degradation of glycine. The H protein shuttles the methylamine group of glycine from the P protein to the T protein. The chain is Glycine cleavage system H protein from Chlorobaculum parvum (strain DSM 263 / NCIMB 8327) (Chlorobium vibrioforme subsp. thiosulfatophilum).